The chain runs to 398 residues: Acetate kinase (398 aa).

N8 lines the Mg(2+) pocket. Residue K15 participates in ATP binding. R89 serves as a coordination point for substrate. D146 (proton donor/acceptor) is an active-site residue. ATP-binding positions include 206–210, 283–285, and 331–335; these read HIGNG, DMR, and GMGEN. A Mg(2+)-binding site is contributed by E383.

It belongs to the acetokinase family. Homodimer. It depends on Mg(2+) as a cofactor. Mn(2+) is required as a cofactor.

The protein resides in the cytoplasm. It carries out the reaction acetate + ATP = acetyl phosphate + ADP. It functions in the pathway metabolic intermediate biosynthesis; acetyl-CoA biosynthesis; acetyl-CoA from acetate: step 1/2. Catalyzes the formation of acetyl phosphate from acetate and ATP. Can also catalyze the reverse reaction. The protein is Acetate kinase of Streptococcus pyogenes serotype M12 (strain MGAS2096).